The following is a 606-amino-acid chain: Probable potassium transport system protein Kup (606 aa).

The next 12 helical transmembrane spans lie at 18–38 (GLVFGDIGTSPIYTLTVVFAL), 46–66 (VFGILSLVFWTMTILVTAEYA), 97–117 (LTFVVFLTYLGVSLLMGDGVI), 138–158 (GLHQSWLILIAAIIAVGLFVF), 166–186 (VAGAFGPIMVVWFASLALSGA), 212–232 (GLAGFIVLSEVILCATGGEAL), 247–267 (AWYIVFWALYLNYLGQGAFII), 287–307 (LYIPFLILTILATIIASQAMI), 339–359 (IYIGSVNWMLMIAVVVIMLVF), 368–388 (AYGLAVTGSMSITGIMMILIL), 395–415 (WKAVFAALITVVDLVFFTACL), and 418–438 (LPHGGYWSIILASVPFITILV).

It belongs to the HAK/KUP transporter (TC 2.A.72) family.

It localises to the cell inner membrane. It catalyses the reaction K(+)(in) + H(+)(in) = K(+)(out) + H(+)(out). Its function is as follows. Transport of potassium into the cell. Likely operates as a K(+):H(+) symporter. This is Probable potassium transport system protein Kup from Trichlorobacter lovleyi (strain ATCC BAA-1151 / DSM 17278 / SZ) (Geobacter lovleyi).